A 256-amino-acid polypeptide reads, in one-letter code: Hydroxyacylglutathione hydrolase (256 aa).

Zn(2+) contacts are provided by H56, H58, D60, H61, H114, D133, and H171.

This sequence belongs to the metallo-beta-lactamase superfamily. Glyoxalase II family. Monomer. Zn(2+) is required as a cofactor.

The catalysed reaction is an S-(2-hydroxyacyl)glutathione + H2O = a 2-hydroxy carboxylate + glutathione + H(+). Its pathway is secondary metabolite metabolism; methylglyoxal degradation; (R)-lactate from methylglyoxal: step 2/2. Thiolesterase that catalyzes the hydrolysis of S-D-lactoyl-glutathione to form glutathione and D-lactic acid. In Rhodobacter capsulatus (Rhodopseudomonas capsulata), this protein is Hydroxyacylglutathione hydrolase.